We begin with the raw amino-acid sequence, 170 residues long: Gas vesicle protein A2 (170 aa).

Positions 86-170 (SPMAKTVGRA…PRRRTEEEDR (85 aa)) are disordered. 2 stretches are compositionally biased toward basic and acidic residues: residues 104 to 119 (LTDK…HEHE) and 127 to 137 (DRPRAGAERGR). Residues 138-148 (STQRPRSRPAA) show a composition bias toward basic residues. The span at 149-170 (RPRDEDDRPRSRPRRRTEEEDR) shows a compositional bias: basic and acidic residues.

The protein belongs to the gas vesicle GvpA family. As to quaternary structure, the gas vesicle shell is 2 nm thick and consists of a single layer of this protein. It forms helical ribs nearly perpendicular to the long axis of the vesicle.

The protein resides in the gas vesicle shell. Functionally, gas vesicles are hollow, gas filled proteinaceous nanostructures found in some microorganisms. During planktonic growth they allow positioning of the organism at a favorable depth for light or nutrient acquisition. GvpA forms the protein shell. It is not clear what function GVs perform in soil bacteria. The chain is Gas vesicle protein A2 from Streptomyces coelicolor (strain ATCC BAA-471 / A3(2) / M145).